The primary structure comprises 400 residues: Trans-enoyl reductase ucsL (400 aa).

50-53 (TDHK) is an NADP(+) binding site. Residue 145–152 (SVHGSVAL) participates in substrate binding. NADP(+) contacts are provided by residues 204–207 (STAC), 227–230 (SPRN), tyrosine 245, and 292–293 (LE). 313–317 (GPVMF) is a substrate binding site. 389–390 (VS) contributes to the NADP(+) binding site.

This sequence belongs to the zinc-containing alcohol dehydrogenase family. Monomer.

It functions in the pathway mycotoxin biosynthesis. Its function is as follows. Trans-enoyl reductase; part of the gene cluster that mediates the biosynthesis of UCS1025A, a member of the pyrrolizidinone family that acts as a strong telomerase inhibitor and displays potent antibacterial and antitumor properties. These compounds share a hemiaminal-containing pyrrolizidinone core fused with a gamma-lactone, giving a furopyrrolizidine that is connected to a decalin fragment. The polyketide synthase module (PKS) of the PKS-NRPS ucsA is responsible for the synthesis of the polyketide backbone via the condensation of an acetyl-CoA starter unit with 6 malonyl-CoA units. The downstream nonribosomal peptide synthetase (NRPS) module then amidates the carboxyl end of the polyketide with a 2S,3S-methylproline derived from L-isoleucine by the 2-oxoglutarate-dependent dioxygenase ucsF which converts L-isoleucine to (4S,5S)-4-methylpyrroline-5-carboxylate that is further converted to 2S,3S-methylproline by the pyrroline-5-carboxylate reductase ucsG. Reductive release of the completed aminoacyl polyketide from the assembly line can form the 3-pyrrolin-2-one structure via an intramolecular Knoevenagel reaction. Because ucsA lacks a designated enoylreductase (ER) domain, the required activity is provided the enoyl reductase ucsL. This keto acyclic precursor is the substrate of the Diels-Alderase ucsH, that catalyzes the Diels-Alder cycloaddition. Oxidation of the 3S-methyl group to a carboxylate by the cytochrome P450 monooxygenase ucsK allows an oxa-Michael cyclization that might involve the reductase/dehydrogenase ucsI and which furnishes the furopyrrolizidine. The oxidase ucsJ likely plays a critical role in stereoselective reduction of the C5-C6 double bond to afford the required R-configured carboxylate group. Further enolization and oxidation at C5 by an unidentified enzyme affords the last intermediate that can undergo oxa-Michael cyclization to yield UCS1025A. This is Trans-enoyl reductase ucsL from Acremonium sp.